The chain runs to 556 residues: Membrane protein insertase YidC (556 aa).

5 consecutive transmembrane segments (helical) span residues 6 to 26, 332 to 352, 358 to 378, 428 to 448, and 501 to 521; these read IVLYMALALIGLSLWNAWQID, LDLTVDYGILWFLSSLLFSLM, VVGNWGWSIVLVTVLIKLAFY, LGGCLPILIQIPVFIALYWVL, and VMMFLPILFTGLFWNFPSGLV.

The protein belongs to the OXA1/ALB3/YidC family. Type 1 subfamily. Interacts with the Sec translocase complex via SecD. Specifically interacts with transmembrane segments of nascent integral membrane proteins during membrane integration.

The protein localises to the cell inner membrane. Its function is as follows. Required for the insertion and/or proper folding and/or complex formation of integral membrane proteins into the membrane. Involved in integration of membrane proteins that insert both dependently and independently of the Sec translocase complex, as well as at least some lipoproteins. Aids folding of multispanning membrane proteins. This Legionella pneumophila (strain Corby) protein is Membrane protein insertase YidC.